The chain runs to 87 residues: Acyl-CoA-binding protein (87 aa).

Position 2 is an N-acetylserine (serine 2). The 86-residue stretch at 2–87 (SQAEFDKAAE…VEDLKKKYGI (86 aa)) folds into the ACB domain. Position 8 is an N6-acetyllysine; alternate (lysine 8). Position 8 is an N6-succinyllysine; alternate (lysine 8). Lysine 14 is an an acyl-CoA binding site. Residue lysine 17 is modified to N6-succinyllysine. Lysine 19 carries the post-translational modification N6-acetyllysine. Tyrosine 29 is subject to Phosphotyrosine. An acyl-CoA-binding positions include 29-33 (YSHYK), lysine 55, and tyrosine 74. Lysine 55 is subject to N6-acetyllysine; alternate. Residue lysine 55 is modified to N6-succinyllysine; alternate. Lysine 55 is modified (N6-(2-hydroxyisobutyryl)lysine; alternate). Lysine 55 is modified (N6-malonyllysine; alternate). Residue lysine 77 is modified to N6-acetyllysine; alternate. Residue lysine 77 is modified to N6-succinyllysine; alternate.

It belongs to the ACBP family. As to quaternary structure, monomer.

It is found in the endoplasmic reticulum. The protein resides in the golgi apparatus. In terms of biological role, binds medium- and long-chain acyl-CoA esters with very high affinity and may function as an intracellular carrier of acyl-CoA esters. The sequence is that of Acyl-CoA-binding protein (DBI) from Canis lupus familiaris (Dog).